A 174-amino-acid polypeptide reads, in one-letter code: Ferredoxin-thioredoxin reductase, variable chain, chloroplastic (174 aa).

The transit peptide at 1-62 (MTTGVAVMSS…RTRARLAICC (62 aa)) directs the protein to the chloroplast. Over residues 69 to 81 (DSSTGFDSSSSSP) the composition is skewed to low complexity. The tract at residues 69-89 (DSSTGFDSSSSSPPEEDEELK) is disordered. 2 positions are modified to phosphoserine: Ser70 and Ser71.

The protein belongs to the ferredoxin thioredoxin reductase alpha subunit family. In terms of assembly, heterodimer of subunit A (variable subunit) and subunit B (catalytic subunit). Heterodimeric FTR forms a complex with ferredoxin and thioredoxin.

The protein resides in the plastid. It localises to the chloroplast. In terms of biological role, variable subunit of the ferredoxin-thioredoxin reductase (FTR), which catalyzes the two-electron reduction of thioredoxins by the electrons provided by reduced ferredoxin. This Spinacia oleracea (Spinach) protein is Ferredoxin-thioredoxin reductase, variable chain, chloroplastic (FTRV).